A 634-amino-acid polypeptide reads, in one-letter code: Microtubule-associated protein 70-2 (634 aa).

Residues 1–57 (MSDVSGDGDLSATVTEHEVTPQPPVSSATYPSLTVSASYKESSGGKSSSKRRPIRPS) form a disordered region. Residues 25–35 (VSSATYPSLTV) are compositionally biased toward polar residues. Low complexity predominate over residues 36 to 47 (SASYKESSGGKS). Positions 74–392 (DPVKVELNRL…LRLKVLEETL (319 aa)) form a coiled coil. Residues 258–494 (ILDRMHRQKV…YSFNKATDDS (237 aa)) are required for targeting to microtubules. Composition is skewed to polar residues over residues 393 to 417 (RGTSSSATRNTPEARSMSNGPSRRQ) and 443 to 464 (MRHSLSINSTSVLKNAKGTSKS). 2 disordered regions span residues 393-526 (RGTS…SVPG) and 594-634 (VEKD…KSTQ). Residues 532-601 (LQKEVVSLRK…MRVEKDQDAR (70 aa)) adopt a coiled-coil conformation. Positions 605–616 (FSNSKSPSNTAQ) are enriched in polar residues.

This sequence belongs to the MAP70 family.

Its subcellular location is the cytoplasm. It is found in the cytoskeleton. In terms of biological role, plant-specific protein that interact with microtubules. This chain is Microtubule-associated protein 70-2 (MAP70.2), found in Arabidopsis thaliana (Mouse-ear cress).